The primary structure comprises 689 residues: tRNA 5-methylaminomethyl-2-thiouridine biosynthesis bifunctional protein MnmC (689 aa).

The tRNA (mnm(5)s(2)U34)-methyltransferase stretch occupies residues 1-245 (MNQRPIQTAT…KREMLTGTLP (245 aa)). An FAD-dependent cmnm(5)s(2)U34 oxidoreductase region spans residues 270-689 (IGGGIVSALT…RSPATQESSR (420 aa)).

This sequence in the N-terminal section; belongs to the methyltransferase superfamily. tRNA (mnm(5)s(2)U34)-methyltransferase family. It in the C-terminal section; belongs to the DAO family. FAD serves as cofactor.

It localises to the cytoplasm. The enzyme catalyses 5-aminomethyl-2-thiouridine(34) in tRNA + S-adenosyl-L-methionine = 5-methylaminomethyl-2-thiouridine(34) in tRNA + S-adenosyl-L-homocysteine + H(+). Its function is as follows. Catalyzes the last two steps in the biosynthesis of 5-methylaminomethyl-2-thiouridine (mnm(5)s(2)U) at the wobble position (U34) in tRNA. Catalyzes the FAD-dependent demodification of cmnm(5)s(2)U34 to nm(5)s(2)U34, followed by the transfer of a methyl group from S-adenosyl-L-methionine to nm(5)s(2)U34, to form mnm(5)s(2)U34. This chain is tRNA 5-methylaminomethyl-2-thiouridine biosynthesis bifunctional protein MnmC, found in Yersinia pestis.